A 519-amino-acid chain; its full sequence is Demethylepipodophyllotoxin synthase (519 aa).

Residues 6-26 form a helical membrane-spanning segment; it reads CLETLLLGFFVLLPCFFYFVW. Residue C458 coordinates heme.

Belongs to the cytochrome P450 family. The cofactor is heme. Rhizome-specific expression.

It is found in the membrane. It catalyses the reaction (-)-4'-desmethyl-deoxypodophyllotoxin + reduced [NADPH--hemoprotein reductase] + O2 = 4'-demethylepipodophyllotoxin + oxidized [NADPH--hemoprotein reductase] + H2O + H(+). The protein operates within aromatic compound metabolism; phenylpropanoid biosynthesis. Cytochrome P450 involved in the biosynthesis of etoposide, a chemotherapeutic compound of the topoisomerase inhibitor family. Catalyzes the hydroxylation of deoxypodophyllotoxin to form epipodophyllotoxin. In Sinopodophyllum hexandrum (Himalayan may apple), this protein is Demethylepipodophyllotoxin synthase.